The following is a 283-amino-acid chain: Phosphatidylserine decarboxylase proenzyme (283 aa).

Residues Asp96, His152, and Ser250 each act as charge relay system; for autoendoproteolytic cleavage activity in the active site. Catalysis depends on Ser250, which acts as the Schiff-base intermediate with substrate; via pyruvic acid; for decarboxylase activity. Ser250 carries the post-translational modification Pyruvic acid (Ser); by autocatalysis.

It belongs to the phosphatidylserine decarboxylase family. PSD-B subfamily. Prokaryotic type I sub-subfamily. In terms of assembly, heterodimer of a large membrane-associated beta subunit and a small pyruvoyl-containing alpha subunit. It depends on pyruvate as a cofactor. In terms of processing, is synthesized initially as an inactive proenzyme. Formation of the active enzyme involves a self-maturation process in which the active site pyruvoyl group is generated from an internal serine residue via an autocatalytic post-translational modification. Two non-identical subunits are generated from the proenzyme in this reaction, and the pyruvate is formed at the N-terminus of the alpha chain, which is derived from the carboxyl end of the proenzyme. The autoendoproteolytic cleavage occurs by a canonical serine protease mechanism, in which the side chain hydroxyl group of the serine supplies its oxygen atom to form the C-terminus of the beta chain, while the remainder of the serine residue undergoes an oxidative deamination to produce ammonia and the pyruvoyl prosthetic group on the alpha chain. During this reaction, the Ser that is part of the protease active site of the proenzyme becomes the pyruvoyl prosthetic group, which constitutes an essential element of the active site of the mature decarboxylase.

The protein localises to the cell membrane. It catalyses the reaction a 1,2-diacyl-sn-glycero-3-phospho-L-serine + H(+) = a 1,2-diacyl-sn-glycero-3-phosphoethanolamine + CO2. It functions in the pathway phospholipid metabolism; phosphatidylethanolamine biosynthesis; phosphatidylethanolamine from CDP-diacylglycerol: step 2/2. In terms of biological role, catalyzes the formation of phosphatidylethanolamine (PtdEtn) from phosphatidylserine (PtdSer). In Acinetobacter baumannii (strain ATCC 17978 / DSM 105126 / CIP 53.77 / LMG 1025 / NCDC KC755 / 5377), this protein is Phosphatidylserine decarboxylase proenzyme.